A 106-amino-acid chain; its full sequence is Large ribosomal subunit protein P2 (106 aa).

Residues 80-106 (AAAAPAKKVVEEKKEESDDDMGMGLFD) are disordered.

The protein belongs to the eukaryotic ribosomal protein P1/P2 family. In terms of assembly, P1 and P2 exist as dimers at the large ribosomal subunit. Post-translationally, phosphorylated.

Plays an important role in the elongation step of protein synthesis. The polypeptide is Large ribosomal subunit protein P2 (rplp2) (Dictyostelium discoideum (Social amoeba)).